The chain runs to 476 residues: Bifunctional protein HldE (476 aa).

Residues 1-319 (MKVSLPAFEK…EALALHHGES (319 aa)) are ribokinase. 195–198 (NMSE) lines the ATP pocket. Residue D264 is part of the active site. Residues 345–476 (MTNGCFDILH…AIIQNIMANQ (132 aa)) form a cytidylyltransferase region.

In the N-terminal section; belongs to the carbohydrate kinase PfkB family. The protein in the C-terminal section; belongs to the cytidylyltransferase family. Homodimer.

It catalyses the reaction D-glycero-beta-D-manno-heptose 7-phosphate + ATP = D-glycero-beta-D-manno-heptose 1,7-bisphosphate + ADP + H(+). It carries out the reaction D-glycero-beta-D-manno-heptose 1-phosphate + ATP + H(+) = ADP-D-glycero-beta-D-manno-heptose + diphosphate. Its pathway is nucleotide-sugar biosynthesis; ADP-L-glycero-beta-D-manno-heptose biosynthesis; ADP-L-glycero-beta-D-manno-heptose from D-glycero-beta-D-manno-heptose 7-phosphate: step 1/4. It participates in nucleotide-sugar biosynthesis; ADP-L-glycero-beta-D-manno-heptose biosynthesis; ADP-L-glycero-beta-D-manno-heptose from D-glycero-beta-D-manno-heptose 7-phosphate: step 3/4. Catalyzes the phosphorylation of D-glycero-D-manno-heptose 7-phosphate at the C-1 position to selectively form D-glycero-beta-D-manno-heptose-1,7-bisphosphate. Functionally, catalyzes the ADP transfer from ATP to D-glycero-beta-D-manno-heptose 1-phosphate, yielding ADP-D-glycero-beta-D-manno-heptose. The sequence is that of Bifunctional protein HldE from Shewanella baltica (strain OS155 / ATCC BAA-1091).